A 391-amino-acid chain; its full sequence is Probable tRNA sulfurtransferase (391 aa).

The THUMP domain maps to 60-167 (DEIIDHIKKV…KDNCYVYTDR (108 aa)). ATP contacts are provided by residues 185 to 186 (LL), 210 to 211 (HF), Arg267, Gly289, and Gln298.

Belongs to the ThiI family.

The protein resides in the cytoplasm. The catalysed reaction is [ThiI sulfur-carrier protein]-S-sulfanyl-L-cysteine + a uridine in tRNA + 2 reduced [2Fe-2S]-[ferredoxin] + ATP + H(+) = [ThiI sulfur-carrier protein]-L-cysteine + a 4-thiouridine in tRNA + 2 oxidized [2Fe-2S]-[ferredoxin] + AMP + diphosphate. The enzyme catalyses [ThiS sulfur-carrier protein]-C-terminal Gly-Gly-AMP + S-sulfanyl-L-cysteinyl-[cysteine desulfurase] + AH2 = [ThiS sulfur-carrier protein]-C-terminal-Gly-aminoethanethioate + L-cysteinyl-[cysteine desulfurase] + A + AMP + 2 H(+). It participates in cofactor biosynthesis; thiamine diphosphate biosynthesis. Catalyzes the ATP-dependent transfer of a sulfur to tRNA to produce 4-thiouridine in position 8 of tRNAs, which functions as a near-UV photosensor. Also catalyzes the transfer of sulfur to the sulfur carrier protein ThiS, forming ThiS-thiocarboxylate. This is a step in the synthesis of thiazole, in the thiamine biosynthesis pathway. The sulfur is donated as persulfide by IscS. The chain is Probable tRNA sulfurtransferase from Finegoldia magna (strain ATCC 29328 / DSM 20472 / WAL 2508) (Peptostreptococcus magnus).